A 434-amino-acid chain; its full sequence is Isocitrate lyase (434 aa).

91–93 provides a ligand contact to substrate; the sequence is SGW. D157 lines the Mg(2+) pocket. C195 functions as the Proton acceptor in the catalytic mechanism. Residues 196–197, R232, 317–321, and T351 each bind substrate; these read GH and NCSPS.

Belongs to the isocitrate lyase/PEP mutase superfamily. Isocitrate lyase family. Homotetramer. Mg(2+) is required as a cofactor.

The catalysed reaction is D-threo-isocitrate = glyoxylate + succinate. It participates in carbohydrate metabolism; glyoxylate cycle; (S)-malate from isocitrate: step 1/2. In terms of biological role, involved in the metabolic adaptation in response to environmental changes. Catalyzes the reversible formation of succinate and glyoxylate from isocitrate, a key step of the glyoxylate cycle, which operates as an anaplerotic route for replenishing the tricarboxylic acid cycle during growth on fatty acid substrates. This is Isocitrate lyase (aceA) from Escherichia coli O6:H1 (strain CFT073 / ATCC 700928 / UPEC).